A 599-amino-acid chain; its full sequence is Glycerophosphodiester phosphodiesterase domain-containing protein 5 (599 aa).

Residues 1-42 (MVKHQPLQYYEPQLCLSCLTGIYGCRWKRYQRSHDDTTKWER) are Cytoplasmic-facing. Disulfide bonds link Cys-15–Cys-18 and Cys-25–Cys-576. A helical transmembrane segment spans residues 43-63 (LWFLILTSSFFLTLVWFYFWW). Residues 64–87 (EVHNDYNEINWFLYNRMGYWSDWS) lie on the Extracellular side of the membrane. Residues 88-108 (IPILVTTAAGFTYITVLLILA) traverse the membrane as a helical segment. The Cytoplasmic segment spans residues 109–125 (LCHIAVGQQMNLHWLHK). A helical membrane pass occupies residues 126–146 (IGLMTTLITTVVTMSSIAQLW). Over 147 to 160 (DDEWEMVFISLQAT) the chain is Extracellular. Residues 161–181 (APFLHIGALAAVTALSWLIAG) traverse the membrane as a helical segment. Topologically, residues 182–192 (QFARMEKATSQ) are cytoplasmic. A helical transmembrane segment spans residues 193–213 (MLMVTAYLAVVVALYLVPLTI). At 214–497 (SSPCIMEKKA…IWLMPPDEYR (284 aa)) the chain is on the extracellular side. The region spanning 228-485 (PAIIGHRGAP…DSSHVLRKVP (258 aa)) is the GP-PDE domain. Residues Asn-301, Asn-336, Asn-352, Asn-374, and Asn-448 are each glycosylated (N-linked (GlcNAc...) asparagine). Residues 498 to 518 (LIWITSDLISFIIIVGVFIFQ) form a helical membrane-spanning segment. Residues 519–599 (NYHNDQWRLG…DHRDTRLRMN (81 aa)) lie on the Cytoplasmic side of the membrane.

It belongs to the glycerophosphoryl diester phosphodiesterase family. As to quaternary structure, interacts with PRDX1; forms a mixed-disulfide with PRDX1, leading to disrupt intramolecular disulfide bond between Cys-25 and Cys-576. Intramolecular disulfide bond between Cys-25 and Cys-576 is reduced by PRDX1. As to expression, detected in mature motor neurons.

The protein resides in the endomembrane system. It is found in the cytoplasm. It localises to the perinuclear region. Its subcellular location is the cell projection. The protein localises to the growth cone. It carries out the reaction a 1,2-diacyl-sn-glycero-3-phospho-(1D-myo-inositol-4,5-bisphosphate) + H2O = 1D-myo-inositol 1,4,5-trisphosphate + a 1,2-diacyl-sn-glycerol + H(+). The catalysed reaction is sn-glycerol 3-phosphocholine + H2O = sn-glycerol 3-phosphate + choline + H(+). With respect to regulation, activated by PRDX1 by reduction of an intramolecular disulfide bond. Glycerophosphodiester phosphodiesterase that promotes cell cycle exit and drives spinal motor neuron differentiation. Mediates the cleavage of glycosylphosphatidylinositol (GPI) anchor of target proteins: removes the GPI-anchor of RECK, leading to release RECK from the plasma membrane. May contribute to the osmotic regulation of cellular glycerophosphocholine. This Gallus gallus (Chicken) protein is Glycerophosphodiester phosphodiesterase domain-containing protein 5 (GDPD5).